A 191-amino-acid chain; its full sequence is Ion-translocating oxidoreductase complex subunit B (191 aa).

The segment at 1–26 (MSAVLIAVLALLALCLLGGAILGFAA) is hydrophobic. One can recognise a 4Fe-4S domain in the interval 32 to 90 (EGDPIAEQINALLPQTQCGQCGYPGCKPYAEAIAGGDKINKCPPGGEATIQALADLLDV). 12 residues coordinate [4Fe-4S] cluster: Cys-49, Cys-52, Cys-57, Cys-73, Cys-114, Cys-117, Cys-120, Cys-124, Cys-144, Cys-147, Cys-150, and Cys-154. 2 consecutive 4Fe-4S ferredoxin-type domains span residues 105–134 (MVAY…GAAR) and 135–164 (QMHT…MIEV).

This sequence belongs to the 4Fe4S bacterial-type ferredoxin family. RnfB subfamily. As to quaternary structure, the complex is composed of six subunits: RnfA, RnfB, RnfC, RnfD, RnfE and RnfG. It depends on [4Fe-4S] cluster as a cofactor.

Its subcellular location is the cell inner membrane. Part of a membrane-bound complex that couples electron transfer with translocation of ions across the membrane. The sequence is that of Ion-translocating oxidoreductase complex subunit B from Stutzerimonas stutzeri (strain A1501) (Pseudomonas stutzeri).